A 350-amino-acid chain; its full sequence is Adenine deaminase (350 aa).

3 residues coordinate Zn(2+): His-24, His-26, and His-207. Glu-210 (proton donor) is an active-site residue. Position 288 (Asp-288) interacts with Zn(2+). Position 289 (Asp-289) interacts with substrate.

Belongs to the metallo-dependent hydrolases superfamily. Adenosine and AMP deaminases family. Adenine deaminase type 2 subfamily. The cofactor is Zn(2+).

The enzyme catalyses adenine + H2O + H(+) = hypoxanthine + NH4(+). In terms of biological role, catalyzes the hydrolytic deamination of adenine to hypoxanthine. Plays an important role in the purine salvage pathway and in nitrogen catabolism. In Paraburkholderia phytofirmans (strain DSM 17436 / LMG 22146 / PsJN) (Burkholderia phytofirmans), this protein is Adenine deaminase.